Here is a 555-residue protein sequence, read N- to C-terminus: Protein NRT1/ PTR FAMILY 2.1 (555 aa).

12 helical membrane-spanning segments follow: residues 32-52 (TLLGISVTSYGWVLNLIVFLI), 68-88 (IVNGCLSMLPVVTAILADSFF), 91-111 (IPVISASAFISLLGIFLLTLI), 127-147 (ILCQSPSKLHLGVLYAALALV), 175-195 (FFNWYFLTVNTGAIISATAIV), 205-225 (LGFGLCAAANLISFIVFISGK), 324-344 (VLPLWLAILFVGTSIGVQASM), 369-389 (VIVLISSCVFLVLNNWTIYPI), 401-421 (LQQVGIGQVFNILSMAISAIV), 437-457 (VLWLLPPLVIVGIGDAFHYMA), 476-496 (SVTSVAFGISFYLSTALINLI), and 517-537 (WVLVIGGVLNLGYFFVCSWYF).

The protein belongs to the major facilitator superfamily. Proton-dependent oligopeptide transporter (POT/PTR) (TC 2.A.17) family. In terms of tissue distribution, expressed in roots.

It is found in the membrane. Functionally, transporter involved in a passive nitrate efflux. This Arabidopsis thaliana (Mouse-ear cress) protein is Protein NRT1/ PTR FAMILY 2.1 (NPF2.1).